We begin with the raw amino-acid sequence, 64 residues long: Large ribosomal subunit protein bL33 (64 aa).

This sequence belongs to the bacterial ribosomal protein bL33 family.

The chain is Large ribosomal subunit protein bL33 from Microcystis aeruginosa (strain NIES-843 / IAM M-2473).